Here is a 678-residue protein sequence, read N- to C-terminus: ABC transporter B family member 6 (678 aa).

The next 6 membrane-spanning stretches (helical) occupy residues 95–115, 128–148, 206–226, 230–250, 314–334, and 346–366; these read IILC…VPLI, EWHL…IWDI, LLFN…FLLF, AEFA…TLYV, FLLN…GLGL, and LGDV…LSWL. The ABC transmembrane type-1 domain maps to 95 to 375; sequence IILCVSIIFF…LGSSYRMILT (281 aa). Positions 418 to 660 constitute an ABC transporter domain; sequence IEFRNISFTY…NGDYAHLWNQ (243 aa). Residues tyrosine 427 and 459–470 contribute to the ATP site; that span reads GSTGGGKSTIFR.

This sequence belongs to the ABC transporter superfamily. ABCB family. Heavy Metal importer (TC 3.A.1.210) subfamily.

It localises to the membrane. This Dictyostelium discoideum (Social amoeba) protein is ABC transporter B family member 6 (abcB6).